Here is a 283-residue protein sequence, read N- to C-terminus: Pantothenate synthetase (283 aa).

Position 26–33 (26–33 (MGNLHEGH)) interacts with ATP. Residue H33 is the Proton donor of the active site. A (R)-pantoate-binding site is contributed by Q57. Residue Q57 coordinates beta-alanine. ATP is bound at residue 144 to 147 (GKKD). Q150 is a binding site for (R)-pantoate. ATP is bound by residues V173 and 181-184 (LSSR).

The protein belongs to the pantothenate synthetase family. Homodimer.

It localises to the cytoplasm. It carries out the reaction (R)-pantoate + beta-alanine + ATP = (R)-pantothenate + AMP + diphosphate + H(+). Its pathway is cofactor biosynthesis; (R)-pantothenate biosynthesis; (R)-pantothenate from (R)-pantoate and beta-alanine: step 1/1. In terms of biological role, catalyzes the condensation of pantoate with beta-alanine in an ATP-dependent reaction via a pantoyl-adenylate intermediate. The chain is Pantothenate synthetase from Ralstonia nicotianae (strain ATCC BAA-1114 / GMI1000) (Ralstonia solanacearum).